The following is a 116-amino-acid chain: Large ribosomal subunit protein uL18 (116 aa).

Belongs to the universal ribosomal protein uL18 family. Part of the 50S ribosomal subunit; part of the 5S rRNA/L5/L18/L25 subcomplex. Contacts the 5S and 23S rRNAs.

Its function is as follows. This is one of the proteins that bind and probably mediate the attachment of the 5S RNA into the large ribosomal subunit, where it forms part of the central protuberance. The polypeptide is Large ribosomal subunit protein uL18 (Pseudoalteromonas translucida (strain TAC 125)).